Consider the following 303-residue polypeptide: N-acetyl-D-glucosamine kinase (303 aa).

ATP contacts are provided by residues 4-11 and 133-140; these read GFDIGGTK and GVGGGLIF. Positions 157, 177, 179, and 184 each coordinate Zn(2+).

This sequence belongs to the ROK (NagC/XylR) family. NagK subfamily.

It carries out the reaction N-acetyl-D-glucosamine + ATP = N-acetyl-D-glucosamine 6-phosphate + ADP + H(+). It functions in the pathway cell wall biogenesis; peptidoglycan recycling. In terms of biological role, catalyzes the phosphorylation of N-acetyl-D-glucosamine (GlcNAc) derived from cell-wall degradation, yielding GlcNAc-6-P. The protein is N-acetyl-D-glucosamine kinase of Shigella boydii serotype 4 (strain Sb227).